We begin with the raw amino-acid sequence, 324 residues long: D-erythronate dehydrogenase (324 aa).

Residues Ser125, Tyr149, and Lys153 each coordinate NAD(+). Tyr149 functions as the Proton acceptor in the catalytic mechanism.

This sequence belongs to the NAD(P)-dependent epimerase/dehydratase family.

It catalyses the reaction D-erythronate + NAD(+) = 2-dehydro-D-erythronate + NADH + H(+). Functionally, catalyzes oxidation of D-erythronate to 2-oxo-tetronate. Can use either NAD(+) or NADP(+) as cosubstrate, with a preference for NAD(+). This chain is D-erythronate dehydrogenase, found in Cupriavidus necator (strain ATCC 17699 / DSM 428 / KCTC 22496 / NCIMB 10442 / H16 / Stanier 337) (Ralstonia eutropha).